The following is a 435-amino-acid chain: Increased rDNA silencing protein 4 (435 aa).

4 disordered regions span residues 1–20 (MKIP…LQHD), 39–71 (ASIP…QRAA), 136–204 (ASKA…NHTL), and 233–277 (GSKR…PDEI). Over residues 11-20 (SASKDGLQHD) the composition is skewed to basic and acidic residues. The segment covering 48-59 (FSRQAPSQNPSI) has biased composition (polar residues). 2 stretches are compositionally biased toward low complexity: residues 174 to 186 (SSQL…LLQL) and 249 to 265 (QRGS…SDSS). The region spanning 327–435 (ERKRYEEVWE…VPKSVWKSVQ (109 aa)) is the EH domain.

The protein belongs to the IRS4 family.

In terms of biological role, positive regulator of phosphatidylinositol 4,5-bisphosphate turnover and negatively regulates signaling through the cell integrity pathway. Involved in rDNA silencing. This is Increased rDNA silencing protein 4 (IRS4) from Coccidioides immitis (strain RS) (Valley fever fungus).